Reading from the N-terminus, the 274-residue chain is 2,3,4,5-tetrahydropyridine-2,6-dicarboxylate N-succinyltransferase (274 aa).

Substrate is bound by residues Arg104 and Asp141.

The protein belongs to the transferase hexapeptide repeat family. Homotrimer.

It localises to the cytoplasm. It catalyses the reaction (S)-2,3,4,5-tetrahydrodipicolinate + succinyl-CoA + H2O = (S)-2-succinylamino-6-oxoheptanedioate + CoA. It participates in amino-acid biosynthesis; L-lysine biosynthesis via DAP pathway; LL-2,6-diaminopimelate from (S)-tetrahydrodipicolinate (succinylase route): step 1/3. In Photorhabdus laumondii subsp. laumondii (strain DSM 15139 / CIP 105565 / TT01) (Photorhabdus luminescens subsp. laumondii), this protein is 2,3,4,5-tetrahydropyridine-2,6-dicarboxylate N-succinyltransferase.